The following is a 259-amino-acid chain: ATP synthase subunit b 2 (259 aa).

The helical transmembrane segment at 5–27 (WFTVSAQAINFLILVALLKRFLY) threads the bilayer.

The protein belongs to the ATPase B chain family. As to quaternary structure, F-type ATPases have 2 components, F(1) - the catalytic core - and F(0) - the membrane proton channel. F(1) has five subunits: alpha(3), beta(3), gamma(1), delta(1), epsilon(1). F(0) has three main subunits: a(1), b(2) and c(10-14). The alpha and beta chains form an alternating ring which encloses part of the gamma chain. F(1) is attached to F(0) by a central stalk formed by the gamma and epsilon chains, while a peripheral stalk is formed by the delta and b chains.

It localises to the cell inner membrane. F(1)F(0) ATP synthase produces ATP from ADP in the presence of a proton or sodium gradient. F-type ATPases consist of two structural domains, F(1) containing the extramembraneous catalytic core and F(0) containing the membrane proton channel, linked together by a central stalk and a peripheral stalk. During catalysis, ATP synthesis in the catalytic domain of F(1) is coupled via a rotary mechanism of the central stalk subunits to proton translocation. In terms of biological role, component of the F(0) channel, it forms part of the peripheral stalk, linking F(1) to F(0). This is ATP synthase subunit b 2 from Syntrophotalea carbinolica (strain DSM 2380 / NBRC 103641 / GraBd1) (Pelobacter carbinolicus).